The sequence spans 735 residues: Transmembrane channel-like protein 7 (735 aa).

Residues 1–164 (MSEFGAGAEL…QSYFSFLRFL (164 aa)) lie on the Extracellular side of the membrane. The helical transmembrane segment at 165-185 (VLLNFLMFILMFSFVTLPAVI) threads the bilayer. Residues 186 to 233 (SNYGIFNSSSTKISPNNTEPYCTVYTPSGNKGLVYFYTYLKDLLTGTG) lie on the Cytoplasmic side of the membrane. A helical membrane pass occupies residues 234–254 (FLEVTVLFYGYYTIDAAWFSV). Residues 255 to 258 (LRYN) are Extracellular-facing. A helical membrane pass occupies residues 259-279 (LPLAYLLTTFAYLALSFVWII). Over 280–355 (KRSVERFRQH…TMKEKLQIYS (76 aa)) the chain is Cytoplasmic. Residues 356–376 (LRIFINIIVIAVLSGCFYSIY) traverse the membrane as a helical segment. Residues 377–403 (RATVFSQENSSVSIRRNVMIANLLVQY) are Extracellular-facing. An N-linked (GlcNAc...) asparagine glycan is attached at Asn385. A helical membrane pass occupies residues 404-424 (LPSIVITSANFIAPQIFSFLI). The Cytoplasmic segment spans residues 425 to 436 (RFEDYSAAFEIR). The chain crosses the membrane as a helical span at residues 437–457 (LTLIRCVFVRLANVGVLLFSL). Residues 458-488 (WSQIHCDNDQCKACGYDYELYPCWESAVGQE) are Extracellular-facing. The chain crosses the membrane as a helical span at residues 489-509 (MYKLLIFDFMIIIAMTLFVDF). Over 510–548 (PRKLLVTYCSWKLVQWWGLQEFGISDNVLEIIYGQTICW) the chain is Cytoplasmic. The helical transmembrane segment at 549–569 (IGTFFSPLLPAIATIKYFIIF) threads the bilayer. Topologically, residues 570-594 (YIKKISLIHTRKPASRPIRASSSNF) are extracellular. The helical transmembrane segment at 595–615 (FFLAVLLIGLILAFVPLGVSI) threads the bilayer. Over 616 to 634 (ALISSSKACGPFRNFNTSW) the chain is Cytoplasmic. Residues 635–655 (AIVPYTILEFPIGLQKFLYGI) form a helical membrane-spanning segment. Over 656–658 (ASE) the chain is Extracellular. Residues 659-679 (AFAVPFFVIACLFMFYFIALA) traverse the membrane as a helical segment. The Cytoplasmic portion of the chain corresponds to 680-735 (GAHKRVVEQLREQLVTESRDKLFLLEKLSEAQKNSGKPQKARKLTSSWLLEPLDKG). A disordered region spans residues 710 to 735 (AQKNSGKPQKARKLTSSWLLEPLDKG).

It belongs to the TMC family.

It is found in the membrane. Its function is as follows. Probable component of an ion channel. The protein is Transmembrane channel-like protein 7 (Tmc7) of Gallus gallus (Chicken).